The following is an 807-amino-acid chain: Glucocorticoid receptor (807 aa).

Disordered stretches follow at residues 1 to 47, 246 to 284, and 412 to 438; these read MDQG…LPSP, TDVN…QHQQ, and FSVS…SKPS. Positions 1–444 are modulating; it reads MDQGGLKRNC…SKPSGPTHKI (444 aa). Residues 257 to 282 show a composition bias toward basic residues; that stretch reads LQHHQHQQQQHRHLLQHQQHQLHHQH. Over residues 412 to 421 the composition is skewed to low complexity; sequence FSVSFSSSSP. NR C4-type zinc fingers lie at residues 445-465 and 490-514; these read CLVC…CGSC and CAGR…FRKC. Residues 445–519 constitute a DNA-binding region (nuclear receptor); sequence CLVCSDEASG…RFRKCLQAGM (75 aa). The interval 520 to 553 is hinge; that stretch reads NLEARKNKKLIKMKVHRPTGSAEPISNMPVPVIP. The 235-residue stretch at 554–788 folds into the NR LBD domain; it reads RMPQLVPTML…FPEMLAEIIT (235 aa).

Belongs to the nuclear hormone receptor family. NR3 subfamily. In terms of assembly, heteromultimeric cytoplasmic complex with HSP90. Upon ligand binding the complex undergoes a conformation change and moves to the nucleus, where it dissociates. Binds to DNA as a homodimer, and as heterodimer with NR3C2. Interaction with numerous other transcription factors modulates transcription activation.

Its subcellular location is the cytoplasm. It localises to the nucleus. It is found in the mitochondrion. The protein localises to the cytoskeleton. The protein resides in the spindle. Its subcellular location is the microtubule organizing center. It localises to the centrosome. Its function is as follows. Receptor for glucocorticoids (GC). Has a dual mode of action: as a transcription factor that binds to glucocorticoid response elements (GRE), both for nuclear and mitochondrial DNA, and as a modulator of other transcription factors. Affects inflammatory responses, cellular proliferation and differentiation in target tissues. Involved in chromatin remodeling. Plays a role in rapid mRNA degradation by binding to the 5' UTR of target mRNAs and interacting with PNRC2 in a ligand-dependent manner which recruits the RNA helicase UPF1 and the mRNA-decapping enzyme DCP1A, leading to RNA decay. Could act as a coactivator for STAT5-dependent transcription upon growth hormone (GH) stimulation and could reveal an essential role of hepatic GR in the control of body growth. Mediates glucocorticoid-induced apoptosis. Promotes accurate chromosome segregation during mitosis. May act as a tumor suppressor. May play a negative role in adipogenesis through the regulation of lipolytic and antilipogenic gene expression. This chain is Glucocorticoid receptor (nr3c1), found in Paralichthys olivaceus (Bastard halibut).